We begin with the raw amino-acid sequence, 427 residues long: MITDEHPFEFAPQQDEYTQLLTELHNEYCAEQPLDVLQFCSNFFIRKLEEQRLEHRNNHHSRNNLFDTNDTSNDLHPLCEQPQEDFSQQQGIQWETTHMGHPNDHGALHDDDDDPLEDEDDEEFDKFSTEPLPSLPPTNYNRGRRTSVKCREHGTQRQPRLCQGHHPQISGTSERIKVSISNNFLFRNLDEEQYLDVVNAMSEKRVVKGTTVIEQGSVGDFFYVVESGTLDCFIGQNKVTNYEAGGSFGELALMYNAPRAATIITTSDSVLWALDRNTSAPSLMENTSRKRRMYEYFLSEVVLLKSLESYEQHKIADALESVYFEDGQEVVKQGDVGDQFYIIESGEAIVLKEENGVQQQVNQLERGSYFGELALLNDAPRAATVVAHGRLKCATLGKKAFTRLLGPVLDILKRNSENYHAVINQQS.

The segment at 38 to 184 (QFCSNFFIRK…RIKVSISNNF (147 aa)) is dimerization and phosphorylation. A disordered region spans residues 96–145 (TTHMGHPNDHGALHDDDDDPLEDEDDEEFDKFSTEPLPSLPPTNYNRGRR). Residues 110–124 (DDDDDPLEDEDDEEF) show a composition bias toward acidic residues. Position 147 is a phosphoserine (serine 147). 3',5'-cyclic AMP is bound by residues 185-300 (LFRN…FLSE), glutamate 250, arginine 259, 303-422 (LLKS…YHAV), glutamate 372, and arginine 381.

Belongs to the cAMP-dependent kinase regulatory chain family. In terms of assembly, tetramer, composed of 2 regulatory (R) and 2 catalytic (C) subunits. In the presence of cAMP it dissociates into 2 active monomeric C subunits and an R dimer.

In Mucor circinelloides f. lusitanicus (Mucor racemosus var. lusitanicus), this protein is cAMP-dependent protein kinase regulatory subunit (pkar).